The sequence spans 411 residues: Argininosuccinate synthase (411 aa).

A11 to S19 is a binding site for ATP. Y88 provides a ligand contact to L-citrulline. G118 is a binding site for ATP. Positions 120, 124, and 125 each coordinate L-aspartate. N124 contributes to the L-citrulline binding site. Residues R128, S176, E261, and Y273 each contribute to the L-citrulline site.

This sequence belongs to the argininosuccinate synthase family. Type 1 subfamily. As to quaternary structure, homotetramer.

Its subcellular location is the cytoplasm. The enzyme catalyses L-citrulline + L-aspartate + ATP = 2-(N(omega)-L-arginino)succinate + AMP + diphosphate + H(+). Its pathway is amino-acid biosynthesis; L-arginine biosynthesis; L-arginine from L-ornithine and carbamoyl phosphate: step 2/3. This chain is Argininosuccinate synthase, found in Lactiplantibacillus plantarum (strain ATCC BAA-793 / NCIMB 8826 / WCFS1) (Lactobacillus plantarum).